The following is a 95-amino-acid chain: Fatty acid-binding protein, liver (95 aa).

Lys-13 and Lys-18 each carry N6-succinyllysine. At Ser-21 the chain carries Phosphoserine. The residue at position 28 (Lys-28) is an N6-succinyllysine. Phosphothreonine is present on Thr-33. At Ser-38 the chain carries Phosphoserine. Lys-39, Lys-47, and Lys-59 each carry N6-succinyllysine. Residue Ser-69 is modified to Phosphoserine. The residue at position 90 (Lys-90) is an N6-succinyllysine.

The protein belongs to the calycin superfamily. Fatty-acid binding protein (FABP) family. Monomer.

The protein resides in the cytoplasm. Functionally, this protein binds free fatty acids and their coenzyme A derivatives, bilirubin, and some other small molecules in the cytoplasm; it may be involved in intracellular lipid transport. This Chaetophractus villosus (South American armadillo) protein is Fatty acid-binding protein, liver (FABP1).